The chain runs to 394 residues: Protein arginine N-methyltransferase 8 (394 aa).

Gly2 carries the N-myristoyl glycine lipid modification. The tract at residues Met16–Ala40 is disordered. 2 short sequence motifs (SH3-binding) span residues Pro29–Pro42 and Pro53–Arg58. Pro residues predominate over residues Pro30–Pro39. Position 58 is an omega-N-methylarginine; by autocatalysis (Arg58). Arg73 carries the post-translational modification Asymmetric dimethylarginine; by autocatalysis. The region spanning Arg73–Arg394 is the SAM-dependent MTase PRMT-type domain. Residues His86, Arg95, Gly119, Gly119–Thr122, Glu141, and Glu170 contribute to the S-adenosyl-L-methionine site. Residues Glu185 and Glu194 contribute to the active site.

Belongs to the class I-like SAM-binding methyltransferase superfamily. Protein arginine N-methyltransferase family. PRMT8 subfamily. Homodimer. Tetramer; individual homodimers associates to form a homotetramer. Homooctamer; individual homodimers associates to form a homooctamer and homooligomerization is required for proper localization to the cell membrane. Heterodimer with PRMT1; heterodimerization may recruit PRMT1 activity to the plasma membrane. Interacts with PRMT2 (via the SH3 domain). Interacts with FYN (via the SH3 domain). Interacts with EWS; independently of EWS methylation status. As to expression, brain-specific.

It is found in the cell membrane. It carries out the reaction L-arginyl-[protein] + S-adenosyl-L-methionine = N(omega)-methyl-L-arginyl-[protein] + S-adenosyl-L-homocysteine + H(+). It catalyses the reaction L-arginyl-[protein] + 2 S-adenosyl-L-methionine = N(omega),N(omega)-dimethyl-L-arginyl-[protein] + 2 S-adenosyl-L-homocysteine + 2 H(+). Functionally, S-adenosyl-L-methionine-dependent and membrane-associated arginine methyltransferase that can both catalyze the formation of omega-N monomethylarginine (MMA) and asymmetrical dimethylarginine (aDMA) in proteins such as NIFK, myelin basic protein, histone H4, H2A and H2A/H2B dimer. Able to mono- and dimethylate EWS protein; however its precise role toward EWS remains unclear as it still interacts with fully methylated EWS. The chain is Protein arginine N-methyltransferase 8 from Homo sapiens (Human).